The sequence spans 312 residues: Aspartate carbamoyltransferase catalytic subunit (312 aa).

Carbamoyl phosphate is bound by residues Arg58 and Thr59. Lys86 contacts L-aspartate. Positions 108, 136, and 139 each coordinate carbamoyl phosphate. Residues Arg169 and Arg223 each coordinate L-aspartate. Carbamoyl phosphate is bound by residues Gly264 and Pro265.

This sequence belongs to the aspartate/ornithine carbamoyltransferase superfamily. ATCase family. In terms of assembly, heterododecamer (2C3:3R2) of six catalytic PyrB chains organized as two trimers (C3), and six regulatory PyrI chains organized as three dimers (R2).

It carries out the reaction carbamoyl phosphate + L-aspartate = N-carbamoyl-L-aspartate + phosphate + H(+). It participates in pyrimidine metabolism; UMP biosynthesis via de novo pathway; (S)-dihydroorotate from bicarbonate: step 2/3. In terms of biological role, catalyzes the condensation of carbamoyl phosphate and aspartate to form carbamoyl aspartate and inorganic phosphate, the committed step in the de novo pyrimidine nucleotide biosynthesis pathway. The protein is Aspartate carbamoyltransferase catalytic subunit of Desulforapulum autotrophicum (strain ATCC 43914 / DSM 3382 / VKM B-1955 / HRM2) (Desulfobacterium autotrophicum).